The primary structure comprises 555 residues: Glutamine--tRNA ligase (555 aa).

Residues 35–45 (PEPNGYLHIGH) carry the 'HIGH' region motif. ATP-binding positions include 36 to 38 (EPN) and 42 to 48 (HIGHAKS). Residues aspartate 68 and tyrosine 213 each coordinate L-glutamine. ATP contacts are provided by residues threonine 232 and 262 to 263 (RL). The 'KMSKS' region motif lies at 269 to 273 (ITSKR).

Belongs to the class-I aminoacyl-tRNA synthetase family. In terms of assembly, monomer.

The protein localises to the cytoplasm. It carries out the reaction tRNA(Gln) + L-glutamine + ATP = L-glutaminyl-tRNA(Gln) + AMP + diphosphate. The polypeptide is Glutamine--tRNA ligase (Azotobacter vinelandii (strain DJ / ATCC BAA-1303)).